The primary structure comprises 146 residues: MALLKKINTQVNRIMKNSSLVQNICFDRVPLFIPRLSLTVKYCLAVKLLIYLLYCWYIYSEVPSASSKFRSFTFGCVVVYHNKFFPRFIRTHSINSIRTFSKFQVIILFSIEKVTRSESKNHSYSKTDISDLHQGYNNPPSRFISQ.

The chain crosses the membrane as a helical span at residues 38–60 (LTVKYCLAVKLLIYLLYCWYIYS).

Belongs to the UPF0742 family.

It localises to the cytoplasm. Its subcellular location is the nucleus membrane. The sequence is that of UPF0742 protein C1348.03 from Schizosaccharomyces pombe (strain 972 / ATCC 24843) (Fission yeast).